We begin with the raw amino-acid sequence, 90 residues long: Small ribosomal subunit protein bS20 (90 aa).

Residues 1–29 (MANTASAEKRNRQAQKRRARNVQVRTGVK) are disordered.

This sequence belongs to the bacterial ribosomal protein bS20 family.

In terms of biological role, binds directly to 16S ribosomal RNA. The protein is Small ribosomal subunit protein bS20 of Anaeromyxobacter sp. (strain Fw109-5).